Here is a 316-residue protein sequence, read N- to C-terminus: Ribosomal RNA small subunit methyltransferase H (316 aa).

S-adenosyl-L-methionine is bound by residues 35–37, Asp55, Phe79, Asp101, and Gln108; that span reads GGH. Positions 291 to 316 are disordered; sequence AIKPSKDEVDENTRSRSSVLRIAEKL. Basic and acidic residues predominate over residues 294-304; sequence PSKDEVDENTR.

The protein belongs to the methyltransferase superfamily. RsmH family.

Its subcellular location is the cytoplasm. It carries out the reaction cytidine(1402) in 16S rRNA + S-adenosyl-L-methionine = N(4)-methylcytidine(1402) in 16S rRNA + S-adenosyl-L-homocysteine + H(+). Specifically methylates the N4 position of cytidine in position 1402 (C1402) of 16S rRNA. The chain is Ribosomal RNA small subunit methyltransferase H from Vibrio atlanticus (strain LGP32) (Vibrio splendidus (strain Mel32)).